Consider the following 461-residue polypeptide: Phosphomethylpyrimidine synthase (461 aa).

Residues asparagine 80, methionine 109, tyrosine 139, histidine 174, 194–196 (SRG), 235–238 (DSLR), and glutamate 274 each bind substrate. Histidine 278 lines the Zn(2+) pocket. Tyrosine 301 is a substrate binding site. Histidine 342 lines the Zn(2+) pocket. Positions 422, 425, and 430 each coordinate [4Fe-4S] cluster.

The protein belongs to the ThiC family. Homodimer. [4Fe-4S] cluster is required as a cofactor.

The enzyme catalyses 5-amino-1-(5-phospho-beta-D-ribosyl)imidazole + S-adenosyl-L-methionine = 4-amino-2-methyl-5-(phosphooxymethyl)pyrimidine + CO + 5'-deoxyadenosine + formate + L-methionine + 3 H(+). It functions in the pathway cofactor biosynthesis; thiamine diphosphate biosynthesis. Functionally, catalyzes the synthesis of the hydroxymethylpyrimidine phosphate (HMP-P) moiety of thiamine from aminoimidazole ribotide (AIR) in a radical S-adenosyl-L-methionine (SAM)-dependent reaction. This Nautilia profundicola (strain ATCC BAA-1463 / DSM 18972 / AmH) protein is Phosphomethylpyrimidine synthase.